A 243-amino-acid chain; its full sequence is 1-(5-phosphoribosyl)-5-[(5-phosphoribosylamino)methylideneamino] imidazole-4-carboxamide isomerase (243 aa).

Asp-8 serves as the catalytic Proton acceptor. Residue Asp-130 is the Proton donor of the active site.

The protein belongs to the HisA/HisF family.

It localises to the cytoplasm. The catalysed reaction is 1-(5-phospho-beta-D-ribosyl)-5-[(5-phospho-beta-D-ribosylamino)methylideneamino]imidazole-4-carboxamide = 5-[(5-phospho-1-deoxy-D-ribulos-1-ylimino)methylamino]-1-(5-phospho-beta-D-ribosyl)imidazole-4-carboxamide. It participates in amino-acid biosynthesis; L-histidine biosynthesis; L-histidine from 5-phospho-alpha-D-ribose 1-diphosphate: step 4/9. The protein is 1-(5-phosphoribosyl)-5-[(5-phosphoribosylamino)methylideneamino] imidazole-4-carboxamide isomerase of Acinetobacter baylyi (strain ATCC 33305 / BD413 / ADP1).